Consider the following 306-residue polypeptide: Glutaminase (306 aa).

Residues S64, N115, E159, N166, Y190, Y242, and V260 each coordinate substrate.

It belongs to the glutaminase family. As to quaternary structure, homotetramer.

It catalyses the reaction L-glutamine + H2O = L-glutamate + NH4(+). The chain is Glutaminase from Aeromonas salmonicida (strain A449).